The primary structure comprises 152 residues: D-aminoacyl-tRNA deacylase (152 aa).

The Gly-cisPro motif, important for rejection of L-amino acids signature appears at 137 to 138 (GP).

The protein belongs to the DTD family. Homodimer.

Its subcellular location is the cytoplasm. It carries out the reaction glycyl-tRNA(Ala) + H2O = tRNA(Ala) + glycine + H(+). The enzyme catalyses a D-aminoacyl-tRNA + H2O = a tRNA + a D-alpha-amino acid + H(+). An aminoacyl-tRNA editing enzyme that deacylates mischarged D-aminoacyl-tRNAs. Also deacylates mischarged glycyl-tRNA(Ala), protecting cells against glycine mischarging by AlaRS. Acts via tRNA-based rather than protein-based catalysis; rejects L-amino acids rather than detecting D-amino acids in the active site. By recycling D-aminoacyl-tRNA to D-amino acids and free tRNA molecules, this enzyme counteracts the toxicity associated with the formation of D-aminoacyl-tRNA entities in vivo and helps enforce protein L-homochirality. The polypeptide is D-aminoacyl-tRNA deacylase (Thermus aquaticus).